The sequence spans 279 residues: UPF0276 protein SO_2008 (279 aa).

It belongs to the UPF0276 family.

The sequence is that of UPF0276 protein SO_2008 from Shewanella oneidensis (strain ATCC 700550 / JCM 31522 / CIP 106686 / LMG 19005 / NCIMB 14063 / MR-1).